The chain runs to 94 residues: DNA-directed RNA polymerase subunit omega (94 aa).

It belongs to the RNA polymerase subunit omega family. The RNAP catalytic core consists of 2 alpha, 1 beta, 1 beta' and 1 omega subunit. When a sigma factor is associated with the core the holoenzyme is formed, which can initiate transcription.

It carries out the reaction RNA(n) + a ribonucleoside 5'-triphosphate = RNA(n+1) + diphosphate. Promotes RNA polymerase assembly. Latches the N- and C-terminal regions of the beta' subunit thereby facilitating its interaction with the beta and alpha subunits. The sequence is that of DNA-directed RNA polymerase subunit omega from Shewanella pealeana (strain ATCC 700345 / ANG-SQ1).